We begin with the raw amino-acid sequence, 208 residues long: Uracil phosphoribosyltransferase (208 aa).

5-phospho-alpha-D-ribose 1-diphosphate is bound by residues arginine 78, arginine 103, and 130–138; that span reads DPMLATGGS. Uracil is bound by residues isoleucine 193 and 198 to 200; that span reads GDA. Position 199 (aspartate 199) interacts with 5-phospho-alpha-D-ribose 1-diphosphate.

The protein belongs to the UPRTase family. The cofactor is Mg(2+).

It carries out the reaction UMP + diphosphate = 5-phospho-alpha-D-ribose 1-diphosphate + uracil. It functions in the pathway pyrimidine metabolism; UMP biosynthesis via salvage pathway; UMP from uracil: step 1/1. Allosterically activated by GTP. Functionally, catalyzes the conversion of uracil and 5-phospho-alpha-D-ribose 1-diphosphate (PRPP) to UMP and diphosphate. The chain is Uracil phosphoribosyltransferase from Sodalis glossinidius (strain morsitans).